Consider the following 411-residue polypeptide: Glutamate dehydrogenase (411 aa).

The active site involves lysine 102.

It belongs to the Glu/Leu/Phe/Val dehydrogenases family.

It catalyses the reaction L-glutamate + NAD(+) + H2O = 2-oxoglutarate + NH4(+) + NADH + H(+). The catalysed reaction is L-glutamate + NADP(+) + H2O = 2-oxoglutarate + NH4(+) + NADPH + H(+). The polypeptide is Glutamate dehydrogenase (GDH) (Vitis vinifera (Grape)).